A 139-amino-acid chain; its full sequence is Ribosome-binding factor A (139 aa).

Residues 120–139 (PENLLAVEDNTDEDDESFSE) form a disordered region. The span at 128 to 139 (DNTDEDDESFSE) shows a compositional bias: acidic residues.

Belongs to the RbfA family. As to quaternary structure, monomer. Binds 30S ribosomal subunits, but not 50S ribosomal subunits or 70S ribosomes.

It localises to the cytoplasm. In terms of biological role, one of several proteins that assist in the late maturation steps of the functional core of the 30S ribosomal subunit. Associates with free 30S ribosomal subunits (but not with 30S subunits that are part of 70S ribosomes or polysomes). Required for efficient processing of 16S rRNA. May interact with the 5'-terminal helix region of 16S rRNA. In Nostoc punctiforme (strain ATCC 29133 / PCC 73102), this protein is Ribosome-binding factor A.